Consider the following 236-residue polypeptide: Pyridoxine 5'-phosphate synthase (236 aa).

Residue asparagine 6 participates in 3-amino-2-oxopropyl phosphate binding. 8 to 9 (DH) lines the 1-deoxy-D-xylulose 5-phosphate pocket. Arginine 17 is a 3-amino-2-oxopropyl phosphate binding site. The active-site Proton acceptor is histidine 42. 1-deoxy-D-xylulose 5-phosphate contacts are provided by arginine 44 and histidine 49. Residue glutamate 69 is the Proton acceptor of the active site. Threonine 99 is a 1-deoxy-D-xylulose 5-phosphate binding site. The active-site Proton donor is histidine 190. Residues glycine 191 and 212–213 (GH) each bind 3-amino-2-oxopropyl phosphate.

The protein belongs to the PNP synthase family. Homooctamer; tetramer of dimers.

The protein resides in the cytoplasm. It catalyses the reaction 3-amino-2-oxopropyl phosphate + 1-deoxy-D-xylulose 5-phosphate = pyridoxine 5'-phosphate + phosphate + 2 H2O + H(+). Its pathway is cofactor biosynthesis; pyridoxine 5'-phosphate biosynthesis; pyridoxine 5'-phosphate from D-erythrose 4-phosphate: step 5/5. Catalyzes the complicated ring closure reaction between the two acyclic compounds 1-deoxy-D-xylulose-5-phosphate (DXP) and 3-amino-2-oxopropyl phosphate (1-amino-acetone-3-phosphate or AAP) to form pyridoxine 5'-phosphate (PNP) and inorganic phosphate. The chain is Pyridoxine 5'-phosphate synthase from Prosthecochloris aestuarii (strain DSM 271 / SK 413).